We begin with the raw amino-acid sequence, 213 residues long: Octanoyltransferase (213 aa).

The 176-residue stretch at 32–207 (ENSHDEIWLV…NILALLNNPP (176 aa)) folds into the BPL/LPL catalytic domain. Residues 71–78 (RGGQVTYH), 138–140 (SLG), and 151–153 (GLA) contribute to the substrate site. Cys-169 (acyl-thioester intermediate) is an active-site residue.

Belongs to the LipB family.

It is found in the cytoplasm. It carries out the reaction octanoyl-[ACP] + L-lysyl-[protein] = N(6)-octanoyl-L-lysyl-[protein] + holo-[ACP] + H(+). It functions in the pathway protein modification; protein lipoylation via endogenous pathway; protein N(6)-(lipoyl)lysine from octanoyl-[acyl-carrier-protein]: step 1/2. Functionally, catalyzes the transfer of endogenously produced octanoic acid from octanoyl-acyl-carrier-protein onto the lipoyl domains of lipoate-dependent enzymes. Lipoyl-ACP can also act as a substrate although octanoyl-ACP is likely to be the physiological substrate. The chain is Octanoyltransferase from Salmonella paratyphi A (strain ATCC 9150 / SARB42).